The chain runs to 130 residues: uncharacterized protein (130 aa).

A helical transmembrane segment spans residues 8–28 (PFILMIIVLGLFLVSIGGYYY).

Its subcellular location is the membrane. This is an uncharacterized protein from Bacillus anthracis.